We begin with the raw amino-acid sequence, 404 residues long: Deoxyguanosinetriphosphate triphosphohydrolase-like protein (404 aa).

The disordered stretch occupies residues 1 to 33 (MSVGMAAPRAAFSCDPDRSRGRQFAEPPSSNRS). The HD domain occupies 69–217 (RLTHSLEVAQ…AALADDIAYD (149 aa)).

This sequence belongs to the dGTPase family. Type 2 subfamily.

This Rhodopseudomonas palustris (strain HaA2) protein is Deoxyguanosinetriphosphate triphosphohydrolase-like protein.